Consider the following 110-residue polypeptide: Multidrug transporter EmrE (110 aa).

The next 4 membrane-spanning stretches (helical) occupy residues 4-21 (YIYL…TTLM), 34-52 (VGTI…QTLA), 58-80 (IAYA…GFFG), and 87-104 (AIIG…INLL).

This sequence belongs to the drug/metabolite transporter (DMT) superfamily. Small multidrug resistance (SMR) (TC 2.A.7.1) family. Homodimer. Forms an antiparallel dimeric structure. Also forms dimers of homodimers.

It is found in the cell inner membrane. With respect to regulation, substrate identity influences both the ground-state and transition-state energies for the conformational exchange process, emphasizing the coupling between substrate binding and transport. Its function is as follows. Multidrug efflux protein that confers resistance to a wide range of toxic compounds, including ethidium, methyl viologen, acriflavine, tetraphenylphosphonium (TPP(+)), benzalkonium, propidium, dequalinium and the aminoglycoside antibiotics streptomycin and tobramycin. Can also transport the osmoprotectants betaine and choline. The drug efflux is coupled to an influx of protons. Can couple antiport of a drug to either one or two protons, performing both electrogenic and electroneutral transport of a single substrate. Simultaneously binds and cotransports proton and drug. This Escherichia coli (strain K12) protein is Multidrug transporter EmrE (emrE).